The sequence spans 388 residues: Chorismate synthase (388 aa).

NADP(+) contacts are provided by Arg39 and Arg45. FMN contacts are provided by residues 130-132 (RSS), 251-252 (NA), Gly296, 311-315 (KPIPT), and Arg337.

This sequence belongs to the chorismate synthase family. Homotetramer. The cofactor is FMNH2.

It carries out the reaction 5-O-(1-carboxyvinyl)-3-phosphoshikimate = chorismate + phosphate. It functions in the pathway metabolic intermediate biosynthesis; chorismate biosynthesis; chorismate from D-erythrose 4-phosphate and phosphoenolpyruvate: step 7/7. Its function is as follows. Catalyzes the anti-1,4-elimination of the C-3 phosphate and the C-6 proR hydrogen from 5-enolpyruvylshikimate-3-phosphate (EPSP) to yield chorismate, which is the branch point compound that serves as the starting substrate for the three terminal pathways of aromatic amino acid biosynthesis. This reaction introduces a second double bond into the aromatic ring system. The protein is Chorismate synthase of Geobacillus thermodenitrificans (strain NG80-2).